Here is a 284-residue protein sequence, read N- to C-terminus: Phosphatidylglycerol--prolipoprotein diacylglyceryl transferase (284 aa).

The next 7 helical transmembrane spans lie at 14–34 (IAFS…ACAI), 62–82 (YFLW…ILIY), 106–126 (FVGI…IASY), 136–156 (LLIY…FGRI), 190–210 (PSQL…VMWA), 218–238 (GLLI…AEFY), and 252–272 (LSMG…ILLY). Arg155 is an a 1,2-diacyl-sn-glycero-3-phospho-(1'-sn-glycerol) binding site.

This sequence belongs to the Lgt family.

It is found in the cell inner membrane. The enzyme catalyses L-cysteinyl-[prolipoprotein] + a 1,2-diacyl-sn-glycero-3-phospho-(1'-sn-glycerol) = an S-1,2-diacyl-sn-glyceryl-L-cysteinyl-[prolipoprotein] + sn-glycerol 1-phosphate + H(+). It functions in the pathway protein modification; lipoprotein biosynthesis (diacylglyceryl transfer). Its function is as follows. Catalyzes the transfer of the diacylglyceryl group from phosphatidylglycerol to the sulfhydryl group of the N-terminal cysteine of a prolipoprotein, the first step in the formation of mature lipoproteins. This chain is Phosphatidylglycerol--prolipoprotein diacylglyceryl transferase, found in Helicobacter pylori (strain ATCC 700392 / 26695) (Campylobacter pylori).